We begin with the raw amino-acid sequence, 723 residues long: Probable G-protein coupled receptor 149 (723 aa).

The Extracellular segment spans residues 1–31 (MSVMPSNLSLNGTSFFAENHSIMDKPNEQRT). N-linked (GlcNAc...) asparagine glycosylation is found at asparagine 7, asparagine 11, and asparagine 19. A helical membrane pass occupies residues 32–52 (LNVFLFCSTFIIAFTVLLGSI). Residues 53–69 (YSLVSLLKLQNKSTISM) are Cytoplasmic-facing. The helical transmembrane segment at 70–90 (IVTSLSIDDLISIVPVIIFML) threads the bilayer. The Extracellular segment spans residues 91–106 (TQWSSDALPQPLCTTS). Cysteines 103 and 181 form a disulfide. Residues 107–127 (ALIYLFQGISSNLKGSLIVSY) form a helical membrane-spanning segment. At 128–148 (NFYSINKTETMNCSASKRRVS) the chain is on the cytoplasmic side. The chain crosses the membrane as a helical span at residues 149 to 169 (MVWAILSIWIVSLLICILPLC). Over 170–188 (GWGKYIPTTWGCFTDHASS) the chain is Extracellular. Residues 189 to 209 (YILFLFIVYSLCFCLLTVLSV) form a helical membrane-spanning segment. At 210–306 (PLTYQLLCSD…SFTVGFAQKR (97 aa)) the chain is on the cytoplasmic side. The chain crosses the membrane as a helical span at residues 307–327 (FSLILALTKVILWLPMMIQMV). The Extracellular portion of the chain corresponds to 328 to 338 (VQHITGYQSFS). A helical membrane pass occupies residues 339–359 (FETLSFLLTLLAATVTPVFVL). At 360 to 723 (SEHWIHLPCG…RKREEDGNSN (364 aa)) the chain is on the cytoplasmic side. Residues 451–513 (TTDSARPGPA…ERRLSHEEGH (63 aa)) are disordered. Positions 501 to 513 (EGPERRLSHEEGH) are enriched in basic and acidic residues.

This sequence belongs to the G-protein coupled receptor 1 family. Specific expression in peripheral nervous system, including nerve growth factor-dependent sensory and sympathetic neurons, as well as enteric neurons.

It localises to the cell membrane. Orphan receptor. The chain is Probable G-protein coupled receptor 149 (GPR149) from Gallus gallus (Chicken).